The sequence spans 450 residues: TNF receptor-associated factor family protein DDB_G0273433/DDB_G0273509 (450 aa).

An RING-type; degenerate zinc finger spans residues 26 to 73 (CQICFNSVIDFKKETLSFDVLQCRNGHISCHECWNRQLSIKQECPSCK). TRAF-type zinc fingers lie at residues 129-185 (HHLK…KKLN) and 186-243 (KHIE…SQLS). The stretch at 257–297 (QNVMDLHKLQLDECNQDYRKLEKQNRDLEKRLFYLESTVNS) forms a coiled coil. The MATH domain maps to 319–439 (VYKGKWVINN…NNSLTISISI (121 aa)).

The protein belongs to the TNF receptor-associated factor family. A subfamily.

The protein resides in the cytoplasm. Probable adapter protein and signal transducer that links members of the tumor necrosis factor receptor family to different signaling pathways by association with the receptor cytoplasmic domain and kinases. The protein is TNF receptor-associated factor family protein DDB_G0273433/DDB_G0273509 of Dictyostelium discoideum (Social amoeba).